The sequence spans 414 residues: Serine hydroxymethyltransferase (414 aa).

Residues Leu116 and 120–122 (GHL) contribute to the (6S)-5,6,7,8-tetrahydrofolate site. Lys224 bears the N6-(pyridoxal phosphate)lysine mark. (6S)-5,6,7,8-tetrahydrofolate is bound by residues Glu240 and 348–350 (SPF).

It belongs to the SHMT family. In terms of assembly, homodimer. Pyridoxal 5'-phosphate is required as a cofactor.

Its subcellular location is the cytoplasm. The enzyme catalyses (6R)-5,10-methylene-5,6,7,8-tetrahydrofolate + glycine + H2O = (6S)-5,6,7,8-tetrahydrofolate + L-serine. The protein operates within one-carbon metabolism; tetrahydrofolate interconversion. It functions in the pathway amino-acid biosynthesis; glycine biosynthesis; glycine from L-serine: step 1/1. Its function is as follows. Catalyzes the reversible interconversion of serine and glycine with tetrahydrofolate (THF) serving as the one-carbon carrier. This reaction serves as the major source of one-carbon groups required for the biosynthesis of purines, thymidylate, methionine, and other important biomolecules. Also exhibits THF-independent aldolase activity toward beta-hydroxyamino acids, producing glycine and aldehydes, via a retro-aldol mechanism. This chain is Serine hydroxymethyltransferase, found in Campylobacter jejuni (strain RM1221).